The following is a 259-amino-acid chain: Dysbindin domain-containing protein 2 (259 aa).

Disordered stretches follow at residues 27–56 and 174–259; these read SCERVSPPPPLPHFRLPPLPRSRLPGPVSR and ADVF…GACS. Over residues 32–46 the composition is skewed to pro residues; the sequence is SPPPPLPHFRLPPLP. Low complexity predominate over residues 205–223; sequence TSDRTTSRTSSSSSSDSST. Phosphoserine is present on residues Ser-217 and Ser-218. Thr-237 carries the post-translational modification Phosphothreonine. Phosphoserine is present on Ser-242.

This sequence belongs to the dysbindin family. Monomer. Interacts with CSNK1D and CSNK1E. Detected in brain.

Its function is as follows. May modulate the activity of casein kinase-1. Inhibits CSNK1D autophosphorylation (in vitro). This chain is Dysbindin domain-containing protein 2 (DBNDD2), found in Homo sapiens (Human).